The chain runs to 542 residues: Chaperonin GroEL 1 (542 aa).

ATP-binding positions include threonine 30–proline 33, lysine 51, aspartate 87–threonine 91, glycine 415, asparagine 480–alanine 482, and aspartate 496.

It belongs to the chaperonin (HSP60) family. Forms a cylinder of 14 subunits composed of two heptameric rings stacked back-to-back. Interacts with the co-chaperonin GroES.

Its subcellular location is the cytoplasm. It catalyses the reaction ATP + H2O + a folded polypeptide = ADP + phosphate + an unfolded polypeptide.. Its function is as follows. Together with its co-chaperonin GroES, plays an essential role in assisting protein folding. The GroEL-GroES system forms a nano-cage that allows encapsulation of the non-native substrate proteins and provides a physical environment optimized to promote and accelerate protein folding. The polypeptide is Chaperonin GroEL 1 (Nitrobacter winogradskyi (strain ATCC 25391 / DSM 10237 / CIP 104748 / NCIMB 11846 / Nb-255)).